The following is a 332-amino-acid chain: MSTQEKLISHVMKEEPVGCRNKVTVVGVGMVGMASAISVLLKDLCDELALVDVMEDKLKGEAMDLQHGALFLKTHKIVADKDYSVTANSKVVVVTAGARQQEGESRLNLVQRNVNIFKFIIPNIVKYSPNCILLVVSNPVDILTYVAWKLSGFPRHRVIGSGTNLDSARFRHLMGEKFHLHPSSCHGWIVGEHGDSSVAVWSGVNIAGVSLQTLNPNMGADGDSENWKELHKKVVDGAYEVIKLKGYTSWAIGMSVADLVESIVKNLHKVHPVSTLVQGMHGVKDEVFLSIPCVLGNSGLTDVIHMTLKPEEEKQLVKSAETLWGVQKELTL.

NAD(+) contacts are provided by residues 29-57 (GMVGMASAISVLLKDLCDELALVDVMEDK) and Arg-99. Positions 106, 138, and 169 each coordinate substrate. An NAD(+)-binding site is contributed by Asn-138. His-193 acts as the Proton acceptor in catalysis. Thr-248 serves as a coordination point for substrate.

It belongs to the LDH/MDH superfamily. LDH family. In terms of assembly, homotetramer.

The protein localises to the cytoplasm. It carries out the reaction (S)-lactate + NAD(+) = pyruvate + NADH + H(+). It functions in the pathway fermentation; pyruvate fermentation to lactate; (S)-lactate from pyruvate: step 1/1. Functionally, interconverts simultaneously and stereospecifically pyruvate and lactate with concomitant interconversion of NADH and NAD(+). The polypeptide is L-lactate dehydrogenase A chain (ldha) (Fundulus heteroclitus (Killifish)).